Reading from the N-terminus, the 415-residue chain is Acetate kinase (415 aa).

Position 8 (Asn8) interacts with Mg(2+). Position 15 (Lys15) interacts with ATP. Arg106 is a substrate binding site. Asp163 functions as the Proton donor/acceptor in the catalytic mechanism. ATP is bound by residues 222-226 (HLGNG), 296-298 (DLR), and 344-348 (GIGEN). Position 397 (Glu397) interacts with Mg(2+).

This sequence belongs to the acetokinase family. Homodimer. Requires Mg(2+) as cofactor. It depends on Mn(2+) as a cofactor.

The protein resides in the cytoplasm. It catalyses the reaction acetate + ATP = acetyl phosphate + ADP. Its pathway is metabolic intermediate biosynthesis; acetyl-CoA biosynthesis; acetyl-CoA from acetate: step 1/2. Catalyzes the formation of acetyl phosphate from acetate and ATP. Can also catalyze the reverse reaction. The polypeptide is Acetate kinase (Thermosynechococcus vestitus (strain NIES-2133 / IAM M-273 / BP-1)).